The primary structure comprises 85 residues: Large ribosomal subunit protein bL27 (85 aa).

Residues 1-22 (MAHKKAGGSTRNGRDSESKRLG) are disordered.

It belongs to the bacterial ribosomal protein bL27 family.

The polypeptide is Large ribosomal subunit protein bL27 (Vibrio vulnificus (strain CMCP6)).